The following is a 400-amino-acid chain: Phosphoglycerate kinase (400 aa).

Substrate contacts are provided by residues 22-24 (DFN), arginine 38, 61-64 (HLGR), arginine 119, and arginine 152. ATP is bound by residues lysine 205, glycine 296, glutamate 327, and 353-356 (GGDT).

It belongs to the phosphoglycerate kinase family. In terms of assembly, monomer.

It is found in the cytoplasm. The enzyme catalyses (2R)-3-phosphoglycerate + ATP = (2R)-3-phospho-glyceroyl phosphate + ADP. The protein operates within carbohydrate degradation; glycolysis; pyruvate from D-glyceraldehyde 3-phosphate: step 2/5. The protein is Phosphoglycerate kinase of Campylobacter jejuni subsp. jejuni serotype O:2 (strain ATCC 700819 / NCTC 11168).